The primary structure comprises 614 residues: Zinc metalloproteinase dpy-31 (614 aa).

A signal peptide spans Met-1 to Gly-24. Positions Tyr-25–Lys-150 are excised as a propeptide. A Peptidase M12A domain is found at Lys-150–Ser-349. N-linked (GlcNAc...) asparagine glycosylation occurs at Asn-190. 5 cysteine pairs are disulfide-bonded: Cys-193/Cys-348, Cys-216/Cys-237, Cys-352/Cys-372, Cys-374/Cys-383, and Cys-394/Cys-422. His-245 contacts Zn(2+). The active site involves Glu-246. 2 residues coordinate Zn(2+): His-249 and His-255. Residues Asn-344–Glu-384 enclose the EGF-like domain. Residues Cys-394–Leu-510 form the CUB domain. Asn-461 carries N-linked (GlcNAc...) asparagine glycosylation. A TSP type-1 domain is found at Asn-513–Asn-562. Cystine bridges form between Cys-525–Cys-556, Cys-529–Cys-561, and Cys-541–Cys-546.

Zn(2+) is required as a cofactor.

The protein localises to the secreted. With respect to regulation, inhibited by marimastat and tripeptide hydroxamic acids. Inhibited by 1,10-phenanthroline. Its function is as follows. Metalloprotease which cleaves the carboxyl terminus of procollagens to mature collagens. Probably involved in cuticular collagen maturation. This is Zinc metalloproteinase dpy-31 from Teladorsagia circumcincta (Brown stomach worm).